The chain runs to 296 residues: GTPase Era (296 aa).

Positions 2-171 (KAGFIAVVGR…LEALDPYLED (170 aa)) constitute an Era-type G domain. The G1 stretch occupies residues 10–17 (GRPNVGKS). 10–17 (GRPNVGKS) is a GTP binding site. The tract at residues 36 to 40 (GTTRD) is G2. Residues 57–60 (DTPG) are G3. Residues 57 to 61 (DTPGI) and 120 to 123 (NKVD) each bind GTP. The G4 stretch occupies residues 120–123 (NKVD). The G5 stretch occupies residues 150 to 152 (ASG). A KH type-2 domain is found at 202–279 (TRDEIPHSVA…YLGLWVKVKD (78 aa)).

Belongs to the TRAFAC class TrmE-Era-EngA-EngB-Septin-like GTPase superfamily. Era GTPase family. As to quaternary structure, monomer.

It localises to the cytoplasm. It is found in the cell inner membrane. An essential GTPase that binds both GDP and GTP, with rapid nucleotide exchange. Plays a role in 16S rRNA processing and 30S ribosomal subunit biogenesis and possibly also in cell cycle regulation and energy metabolism. The chain is GTPase Era from Fusobacterium nucleatum subsp. nucleatum (strain ATCC 25586 / DSM 15643 / BCRC 10681 / CIP 101130 / JCM 8532 / KCTC 2640 / LMG 13131 / VPI 4355).